A 528-amino-acid polypeptide reads, in one-letter code: MASELLANPTNGSGITRPDPQRTYQVVVAATQNMGIGKDGKLPWRLPSDMKFFKDVTMTTSDPLKRNAVIMGRKTWESIPIQHRPLPGRLNVVLTRSGSFDIATVENVVICGSMISALELLAGSPYCVSVEKVFVIGGGQIYREALNAPGCDAVHITEIEEHIECDTFIPLLDESVFQPWYSSFPLVENKIRYCFTTYVRVRNSVAELTSQTNGCSSDSKSDSGNFEIQNFSFLPKTVFEKHEEYLYLGLVENIISNGVTKNDRTRTGTVSIFGCQMRFNLRKSFPLLTTKKVFWRGVVEELLWFISGSTNAKILKEKGVNIWEGNGSREYLDSIGLTDREEGDLGPIYGFQWRHFGARYTDMHADYSGQGFDQLLDVISKIKNNPDDRRIIQSAWNPSDLRLMALPPCHMFAQFYVANGELSCQMYQRSADMGLGVPFNIAAYALLTCMIAHVCDLVPGDFVHSIGDAHVYSNHLSDLFETSFRMLPKTFPVLKINSGEKDIDSFEAADFKLIGYDPHQKIEMKMAV.

The tract at residues 1-20 (MASELLANPTNGSGITRPDP) is disordered. Residues 23 to 200 (TYQVVVAATQ…IRYCFTTYVR (178 aa)) form the DHFR domain. Position 27 (valine 27) interacts with substrate. Residues alanine 29 and 35–41 (GIGKDGK) each bind NADP(+). Aspartate 49 is a substrate binding site. Residues 73-75 (RKT) and 94-97 (LTRS) contribute to the NADP(+) site. 3 residues coordinate substrate: isoleucine 136, tyrosine 142, and threonine 157. Position 137-144 (137-144 (GGGQIYRE)) interacts with NADP(+). The interval 202 to 528 (RNSVAELTSQ…HQKIEMKMAV (327 aa)) is thymidylate synthase. Arginine 264 is a binding site for dUMP. Cysteine 409 is a catalytic residue. DUMP-binding positions include histidine 410, 428–432 (QRSAD), asparagine 440, and 470–472 (HVY).

In the N-terminal section; belongs to the dihydrofolate reductase family. It in the C-terminal section; belongs to the thymidylate synthase family.

The enzyme catalyses (6S)-5,6,7,8-tetrahydrofolate + NADP(+) = 7,8-dihydrofolate + NADPH + H(+). It carries out the reaction dUMP + (6R)-5,10-methylene-5,6,7,8-tetrahydrofolate = 7,8-dihydrofolate + dTMP. It participates in cofactor biosynthesis; tetrahydrofolate biosynthesis; 5,6,7,8-tetrahydrofolate from 7,8-dihydrofolate: step 1/1. Functionally, bifunctional enzyme. Involved in de novo dTMP biosynthesis. Key enzyme in folate metabolism. Can play two different roles depending on the source of dihydrofolate: de novo synthesis of tetrahydrofolate or recycling of the dihydrofolate released as one of the end products of the TS catalyzed reaction. Catalyzes an essential reaction for de novo glycine and purine synthesis, DNA precursor synthesis, and for the conversion of dUMP to dTMP. The chain is Bifunctional dihydrofolate reductase-thymidylate synthase from Daucus carota (Wild carrot).